We begin with the raw amino-acid sequence, 172 residues long: Large ribosomal subunit protein bL17m (172 aa).

The transit peptide at 1-8 (MRLSFAAA) directs the protein to the mitochondrion.

It belongs to the bacterial ribosomal protein bL17 family. Component of the mitochondrial ribosome large subunit (39S) which comprises a 16S rRNA and about 50 distinct proteins.

It is found in the mitochondrion. The chain is Large ribosomal subunit protein bL17m (MRPL17) from Bos taurus (Bovine).